Reading from the N-terminus, the 75-residue chain is Conotoxin VnMSGL-0111 (75 aa).

Residues 1–20 (MSGLEIMVLTLLLLVSMATS) form the signal peptide. Residues 21–44 (HQDGGEKQATQRDAINVRRRSITR) constitute a propeptide that is removed on maturation. Disulfide bonds link Cys-48–Cys-60, Cys-52–Cys-69, and Cys-59–Cys-73.

The protein belongs to the conotoxin O3 superfamily. In terms of tissue distribution, expressed by the venom duct.

The protein localises to the secreted. The chain is Conotoxin VnMSGL-0111 from Conus ventricosus (Mediterranean cone).